Reading from the N-terminus, the 806-residue chain is U3 small nucleolar RNA-associated protein 17 (806 aa).

WD repeat units follow at residues 266–305, 448–489, 499–538, and 598–635; these read WHAN…RQFL, RNGL…KTWV, GNLE…SAWK, and PHGG…VQWT.

Component of the ribosomal small subunit (SSU) processome.

The protein resides in the nucleus. It localises to the nucleolus. Its function is as follows. Involved in nucleolar processing of pre-18S ribosomal RNA. Required for optimal pre-ribosomal RNA transcription by RNA polymerase I together with a subset of U3 proteins required for transcription (t-UTPs). In Schizosaccharomyces pombe (strain 972 / ATCC 24843) (Fission yeast), this protein is U3 small nucleolar RNA-associated protein 17 (utp17).